A 528-amino-acid polypeptide reads, in one-letter code: Bifunctional purine biosynthesis protein PurH (528 aa).

Residues 1–146 (MAPTALLSVS…KNHDHVAVLT (146 aa)) enclose the MGS-like domain.

Belongs to the PurH family.

The catalysed reaction is (6R)-10-formyltetrahydrofolate + 5-amino-1-(5-phospho-beta-D-ribosyl)imidazole-4-carboxamide = 5-formamido-1-(5-phospho-D-ribosyl)imidazole-4-carboxamide + (6S)-5,6,7,8-tetrahydrofolate. It catalyses the reaction IMP + H2O = 5-formamido-1-(5-phospho-D-ribosyl)imidazole-4-carboxamide. It functions in the pathway purine metabolism; IMP biosynthesis via de novo pathway; 5-formamido-1-(5-phospho-D-ribosyl)imidazole-4-carboxamide from 5-amino-1-(5-phospho-D-ribosyl)imidazole-4-carboxamide (10-formyl THF route): step 1/1. The protein operates within purine metabolism; IMP biosynthesis via de novo pathway; IMP from 5-formamido-1-(5-phospho-D-ribosyl)imidazole-4-carboxamide: step 1/1. The sequence is that of Bifunctional purine biosynthesis protein PurH from Synechococcus sp. (strain WH7803).